Consider the following 440-residue polypeptide: Serine/threonine-protein kinase STK11 (440 aa).

The Protein kinase domain maps to 49 to 309; it reads YLMGDLLGEG…IQQIRQHNWF (261 aa). Residues 55–63 and lysine 78 each bind ATP; that span reads LGEGSYGKV. Residue aspartate 176 is the Proton acceptor of the active site. Phosphothreonine; by autocatalysis occurs at positions 336 and 365. Residues 370 to 440 form a disordered region; sequence VPGQVPEEEA…IRKLSTCKQQ (71 aa). A compositionally biased stretch (basic residues) spans 430–440; the sequence is KIRKLSTCKQQ. Phosphoserine; by PKA is present on serine 435.

This sequence belongs to the protein kinase superfamily. CAMK Ser/Thr protein kinase family. LKB1 subfamily. Catalytic component of a trimeric complex composed of STK11/LKB1, STRAD (STRADA or STRADB) and CAB39/MO25 (CAB39/MO25alpha or CAB39L/MO25beta). It depends on Mg(2+) as a cofactor. Requires Mn(2+) as cofactor. Ubiquitously expressed in all tissues tested. High levels were observed in duodenum and skeletal muscle, lower levels in liver and pancreas.

The protein localises to the nucleus. It localises to the cytoplasm. It carries out the reaction L-seryl-[protein] + ATP = O-phospho-L-seryl-[protein] + ADP + H(+). It catalyses the reaction L-threonyl-[protein] + ATP = O-phospho-L-threonyl-[protein] + ADP + H(+). Functionally, tumor suppressor serine/threonine-protein kinase that controls the activity of AMP-activated protein kinase (AMPK) family members, thereby playing a role in various processes such as cell metabolism, cell polarity, apoptosis and DNA damage response. Acts by phosphorylating the T-loop of AMPK family proteins, leading to promote their activity. This is Serine/threonine-protein kinase STK11 from Gallus gallus (Chicken).